The sequence spans 594 residues: Solute carrier family 13 member 1 (594 aa).

Transmembrane regions (helical) follow at residues 13 to 33 (FLLV…IRTK), 40 to 60 (ILFV…ITAL), 77 to 97 (VASA…CLAT), 113 to 133 (VMMV…STAF), and 134 to 154 (LSMW…VEAV). N174 is a glycosylation site (N-linked (GlcNAc...) asparagine). Positions 192–220 (TNEKKEKTKPAPGSSHDKGKVSRKMETEK) are enriched in basic and acidic residues. A disordered region spans residues 192–226 (TNEKKEKTKPAPGSSHDKGKVSRKMETEKNAVTGA). The next 8 helical transmembrane spans lie at 239–259 (LMCL…ITGT), 283–303 (SWFL…WIWL), 347–367 (IVTL…DPGF), 380–400 (GYVT…LIPA), 461–481 (LSPL…LIVT), 487–507 (ASNP…AEAI), 511–531 (PLQI…LPVA), and 552–572 (AGLG…FTWI). N-linked (GlcNAc...) asparagine glycosylation is present at N590.

The protein belongs to the SLC13A/DASS transporter (TC 2.A.47) family. NADC subfamily. As to expression, highly expressed in kidney and ileum, detected at lower levels in duodenum/jejunum and colon, and at very low levels in cecum, testis, adrenal and adipose tissues. In terms of tissue distribution, expressed in the kidney.

It localises to the apical cell membrane. The catalysed reaction is sulfate(out) + 3 Na(+)(out) = sulfate(in) + 3 Na(+)(in). The enzyme catalyses selenate(out) + 3 Na(+)(out) = selenate(in) + 3 Na(+)(in). It catalyses the reaction thiosulfate(out) + 3 Na(+)(out) = thiosulfate(in) + 3 Na(+)(in). Functionally, sodium:sulfate symporter that mediates sulfate reabsorption in the kidney and small intestine. Can also mediate the transport of selenate and thiosulfate. The chain is Solute carrier family 13 member 1 (Slc13a1) from Mus musculus (Mouse).